The sequence spans 366 residues: Lysophosphatidic acid receptor 1-B (366 aa).

The Extracellular segment spans residues Met-1–Lys-52. 2 disulfides stabilise this stretch: Cys-26–Cys-192 and Cys-190–Cys-197. Residues Asn-29 and Asn-37 are each glycosylated (N-linked (GlcNAc...) asparagine). Lys-41 contacts a 1-acyl-sn-glycero-3-phosphate. The chain crosses the membrane as a helical span at residues Leu-53–Tyr-77. Residues Val-78–Pro-85 lie on the Cytoplasmic side of the membrane. Residues Ile-86 to Phe-109 form a helical membrane-spanning segment. The Extracellular portion of the chain corresponds to Asn-110 to Trp-123. The helical transmembrane segment at Leu-124–Ile-146 threads the bilayer. Arg-126–Asp-131 contacts a 1-acyl-sn-glycero-3-phosphate. At Glu-147–Arg-165 the chain is on the cytoplasmic side. A helical membrane pass occupies residues Val-166 to Val-186. Over Gly-187–Asp-206 the chain is Extracellular. The helical transmembrane segment at Ser-207–Tyr-227 threads the bilayer. Position 212 (Trp-212) interacts with a 1-acyl-sn-glycero-3-phosphate. Over Ala-228 to Ser-257 the chain is Cytoplasmic. A helical transmembrane segment spans residues Leu-258–Leu-282. Residues Asp-283–Lys-296 are Extracellular-facing. Cys-286 and Cys-289 are oxidised to a cystine. A helical transmembrane segment spans residues Phe-297–Asp-317. Over Lys-318–Val-366 the chain is Cytoplasmic.

It belongs to the G-protein coupled receptor 1 family. As to expression, expressed at high levels in oocytes and at lower levels in brain and spinal cord. Below detection level in lung, heart, kidney, liver, muscle, stomach, and intestine.

Its subcellular location is the cell surface. It localises to the cell membrane. It is found in the endosome. Its function is as follows. Receptor for lysophosphatidic acid (LPA). Plays a role in the reorganization of the actin cytoskeleton, cell migration, differentiation and proliferation, and thereby contributes to the responses to tissue damage and infectious agents. Activates downstream signaling cascades via the G(i)/G(o), G(12)/G(13), and G(q) families of heteromeric G proteins. Signaling inhibits adenylyl cyclase activity and decreases cellular cAMP levels. Signaling triggers an increase of cytoplasmic Ca(2+) levels. Signaling leads to the activation of phospholipase C (PLC) and the formation of inositol 1,4,5-trisphosphate. Signaling mediates activation of down-stream MAP kinases. Contributes to the regulation of cell shape. Promotes Rho-dependent reorganization of the actin cytoskeleton in neuronal cells and neurite retraction. Promotes the activation of Rho and the formation of actin stress fibers. Promotes formation of lamellipodia at the leading edge of migrating cells via activation of Rac. Through its function as lysophosphatidic acid receptor, plays a role in chemotaxis and cell migration, including responses to injury and wounding. Promotes cell proliferation in response to lysophosphatidic acid. In Xenopus laevis (African clawed frog), this protein is Lysophosphatidic acid receptor 1-B (lpar1-b).